The sequence spans 20 residues: Antimicrobial peptide EP-20 (20 aa).

Residues glutamate 1–proline 20 are disordered.

The protein localises to the secreted. Functionally, the synthetic peptide inhibits growth of fungus P.capsici and partially that of V.dahliae, F.graminearum and F.omysporum. The chain is Antimicrobial peptide EP-20 from Xenorhabdus budapestensis.